The sequence spans 299 residues: 4-hydroxybenzoate octaprenyltransferase (299 aa).

A run of 8 helical transmembrane segments spans residues 33 to 53, 56 to 76, 105 to 125, 151 to 171, 180 to 200, 214 to 234, 247 to 267, and 278 to 298; these read VGFL…ADGV, WWTL…GCVI, NALL…LTMN, LPQV…FAAI, WLLY…YAMV, AILF…LMLL, HTYW…FIIA, and AFMH…LATT.

This sequence belongs to the UbiA prenyltransferase family. Requires Mg(2+) as cofactor.

It is found in the cell inner membrane. It carries out the reaction all-trans-octaprenyl diphosphate + 4-hydroxybenzoate = 4-hydroxy-3-(all-trans-octaprenyl)benzoate + diphosphate. Its pathway is cofactor biosynthesis; ubiquinone biosynthesis. Its function is as follows. Catalyzes the prenylation of para-hydroxybenzoate (PHB) with an all-trans polyprenyl group. Mediates the second step in the final reaction sequence of ubiquinone-8 (UQ-8) biosynthesis, which is the condensation of the polyisoprenoid side chain with PHB, generating the first membrane-bound Q intermediate 3-octaprenyl-4-hydroxybenzoate. In Xylella fastidiosa (strain M23), this protein is 4-hydroxybenzoate octaprenyltransferase.